The sequence spans 274 residues: Type II restriction enzyme XamI (274 aa).

The enzyme catalyses Endonucleolytic cleavage of DNA to give specific double-stranded fragments with terminal 5'-phosphates.. A P subtype restriction enzyme that recognizes the double-stranded sequence 5'-GTCGAC-3' and cleaves after G-1. The chain is Type II restriction enzyme XamI (xamIR) from Xanthomonas campestris pv. amaranthicola.